Here is a 497-residue protein sequence, read N- to C-terminus: MNQVLLEMRGITKTFPGVKALDNVQLTLKKGRVMALMGENGAGKSTLMKVLFGIYQRDCGTIRYQGEQVNYSGAKEALEAGVSMIHQELSPILHRSIAENIWLGREPLKGPLRLIDHAKMYRDTTELLKKLDLHLDPRTPMSELTVATMQMIEISKAISYNSKIIIMDEPTSALTGKEVDHLFEIIEKLKKQGVSIVYISHKMDEIFRICDDITVFRDGCYIGEREAQNTNHDELVQMMVGRDLGDVFPPPTAKPGKVRLEVKNLSVEGVFDNISFKLHEGEILGIAGLVGAGRTELIETLFGVRKHDVGEIWINGENVEIKTPQDAISHKMAFLTEDRRQSGLYLMLDIFANTSIAHLDAYRNKVVNVLDVRSMQKDCASQCTKLKVKTPGMAEKIDNLSGGNQQKVLLARWMLTKPDILFLDEPTRGIDIGAKSEIYKLMRLLTGMGKSLVMISSELPEVIGMSDRILVMHGGKLKGELDGKDASQQQVMSMAFN.

ABC transporter domains are found at residues 6–243 and 256–494; these read LEMR…VGRD and GKVR…VMSM. ATP is bound at residue 38 to 45; that stretch reads GENGAGKS.

The protein belongs to the ABC transporter superfamily. Galactose/methyl galactoside importer (TC 3.A.1.2.3) family. In terms of assembly, the complex is composed of one ATP-binding protein (MglA), two transmembrane proteins (MglC) and a solute-binding protein (MglB).

It is found in the cell inner membrane. It carries out the reaction D-galactose(out) + ATP + H2O = D-galactose(in) + ADP + phosphate + H(+). The enzyme catalyses methyl beta-D-galactoside(out) + ATP + H2O = methyl beta-D-galactoside(in) + ADP + phosphate + H(+). Part of the ABC transporter complex MglABC involved in galactose/methyl galactoside import. Responsible for energy coupling to the transport system. This Photobacterium profundum (strain SS9) protein is Galactose/methyl galactoside import ATP-binding protein MglA 1.